The chain runs to 689 residues: DNA ligase (689 aa).

Residues 32–36 (DAEYD), 81–82 (SL), and E113 each bind NAD(+). Residue K115 is the N6-AMP-lysine intermediate of the active site. The NAD(+) site is built by R136, E176, K306, and K330. Zn(2+)-binding residues include C424, C427, C442, and C448. One can recognise a BRCT domain in the interval 606–689 (AEELPLAEQI…ALLAEHGITI (84 aa)).

The protein belongs to the NAD-dependent DNA ligase family. LigA subfamily. The cofactor is Mg(2+). It depends on Mn(2+) as a cofactor.

The enzyme catalyses NAD(+) + (deoxyribonucleotide)n-3'-hydroxyl + 5'-phospho-(deoxyribonucleotide)m = (deoxyribonucleotide)n+m + AMP + beta-nicotinamide D-nucleotide.. Functionally, DNA ligase that catalyzes the formation of phosphodiester linkages between 5'-phosphoryl and 3'-hydroxyl groups in double-stranded DNA using NAD as a coenzyme and as the energy source for the reaction. It is essential for DNA replication and repair of damaged DNA. The protein is DNA ligase of Colwellia psychrerythraea (strain 34H / ATCC BAA-681) (Vibrio psychroerythus).